The sequence spans 470 residues: Shutoff alkaline exonuclease (470 aa).

This sequence belongs to the herpesviridae alkaline nuclease family. In terms of assembly, forms a complex with the DNA polymerase, the DNA polymerase processivity factor, and the major DNA binding protein.

The protein localises to the host nucleus. Its subcellular location is the host cytoplasm. Plays a role in processing non linear or branched viral DNA intermediates in order to promote the production of mature packaged unit-length linear progeny viral DNA molecules. Exhibits endonuclease and exonuclease activities and accepts both double-stranded and single-stranded DNA as substrate. Exonuclease digestion of DNA is in the 5'-&gt; 3' direction and the products are 5'-monophosphate nucleosides. Additionally, forms a recombinase with the major DNA-binding protein, which displays strand exchange activity. Also acts as a cytoplasmic RNA endonuclease that induces degradation of the majority of the cellular messenger RNAs during early lytic infection. The resulting inhibition of cellular protein synthesis serves to ensure maximal viral gene expression and evasion from host immune response. Internally cleaves host mRNAs which are then degraded by the cellular exonuclease XRN1. Bypasses therefore the regulatory steps of deadenylation and decapping normally required for XRN1 activation. The chain is Shutoff alkaline exonuclease from Epstein-Barr virus (strain GD1) (HHV-4).